The primary structure comprises 1935 residues: Myosin-7 (1935 aa).

Positions 32-81 constitute a Myosin N-terminal SH3-like domain; it reads DLKKDVFVPDDKEEFVKATILSREGGKVTAETEHGKTVTVKEDQVLQQNP. In terms of domain architecture, Myosin motor spans 85 to 778; the sequence is DKIEDMAMLT…LLGLLEEMRD (694 aa). Lysine 129 bears the N6,N6,N6-trimethyllysine mark. 178–185 is a binding site for ATP; the sequence is GESGAGKT. A Phosphothreonine modification is found at threonine 378. Actin-binding regions lie at residues 655–677 and 757–771; these read LNKLMTNLRSTHPHFVRCIIPNE and KFGHTKVFFKAGLLG. The IQ domain occupies 781–810; the sequence is LSRIITRIQAQSRGVLSRMEFKKLLERRDS. Residues 839–1935 are a coiled coil; it reads LLKSAETEKE…DIGTKGLNEE (1097 aa). Serine 1137 and serine 1269 each carry phosphoserine. Position 1282 is a phosphothreonine (threonine 1282). Tyrosine 1308 carries the post-translational modification Phosphotyrosine. The residue at position 1309 (threonine 1309) is a Phosphothreonine. Serine 1510 carries the phosphoserine modification. Threonine 1513 is subject to Phosphothreonine. Residues 1907 to 1935 are disordered; sequence EERADIAESQVNKLRAKSRDIGTKGLNEE. Residues 1923-1935 show a composition bias toward basic and acidic residues; it reads KSRDIGTKGLNEE.

Belongs to the TRAFAC class myosin-kinesin ATPase superfamily. Myosin family. Muscle myosin is a hexameric protein that consists of 2 heavy chain subunits (MHC), 2 alkali light chain subunits (MLC) and 2 regulatory light chain subunits (MLC-2). Interacts with ECPAS. Interacts (via C-terminus) with LRRC39.

It localises to the cytoplasm. Its subcellular location is the myofibril. It is found in the sarcomere. Myosins are actin-based motor molecules with ATPase activity essential for muscle contraction. Forms regular bipolar thick filaments that, together with actin thin filaments, constitute the fundamental contractile unit of skeletal and cardiac muscle. In Bos taurus (Bovine), this protein is Myosin-7 (MYH7).